The sequence spans 191 residues: uncharacterized protein (191 aa).

This is an uncharacterized protein from Bacillus subtilis (strain 168).